The primary structure comprises 185 residues: Ribosome-recycling factor (185 aa).

A disordered region spans residues 143–163; it reads RKDGEAGEDEVARAEKDLDKS.

It belongs to the RRF family.

It localises to the cytoplasm. Functionally, responsible for the release of ribosomes from messenger RNA at the termination of protein biosynthesis. May increase the efficiency of translation by recycling ribosomes from one round of translation to another. This chain is Ribosome-recycling factor, found in Mycobacterium marinum (strain ATCC BAA-535 / M).